The sequence spans 371 residues: Dead end protein homolog 1 (371 aa).

RRM domains lie at 85–163 and 165–245; these read PQDI…ALDG and PGNF…KLRS.

The protein resides in the nucleus. Its subcellular location is the cytoplasm. Its function is as follows. RNA-binding factor that positively regulates gene expression by prohibiting miRNA-mediated gene suppression. Relieves miRNA repression in germline cells. Prohibits the function of several miRNAs by blocking the accessibility of target mRNAs. Sequence-specific RNA-binding factor that binds to U-rich regions (URRs) in the 3'untranslated region (3'-UTR) of several mRNAs. Does not bind to miRNAs. May play a role during early embryonic survival. The chain is Dead end protein homolog 1 (dnd1) from Xenopus laevis (African clawed frog).